Reading from the N-terminus, the 213-residue chain is ATP phosphoribosyltransferase (213 aa).

The protein belongs to the ATP phosphoribosyltransferase family. Short subfamily. In terms of assembly, heteromultimer composed of HisG and HisZ subunits.

The protein localises to the cytoplasm. The enzyme catalyses 1-(5-phospho-beta-D-ribosyl)-ATP + diphosphate = 5-phospho-alpha-D-ribose 1-diphosphate + ATP. It participates in amino-acid biosynthesis; L-histidine biosynthesis; L-histidine from 5-phospho-alpha-D-ribose 1-diphosphate: step 1/9. In terms of biological role, catalyzes the condensation of ATP and 5-phosphoribose 1-diphosphate to form N'-(5'-phosphoribosyl)-ATP (PR-ATP). Has a crucial role in the pathway because the rate of histidine biosynthesis seems to be controlled primarily by regulation of HisG enzymatic activity. In Nitrosococcus oceani (strain ATCC 19707 / BCRC 17464 / JCM 30415 / NCIMB 11848 / C-107), this protein is ATP phosphoribosyltransferase.